A 121-amino-acid polypeptide reads, in one-letter code: Large ribosomal subunit protein bL12 (121 aa).

This sequence belongs to the bacterial ribosomal protein bL12 family. Homodimer. Part of the ribosomal stalk of the 50S ribosomal subunit. Forms a multimeric L10(L12)X complex, where L10 forms an elongated spine to which 2 to 4 L12 dimers bind in a sequential fashion. Binds GTP-bound translation factors.

In terms of biological role, forms part of the ribosomal stalk which helps the ribosome interact with GTP-bound translation factors. Is thus essential for accurate translation. The protein is Large ribosomal subunit protein bL12 of Ureaplasma urealyticum serovar 10 (strain ATCC 33699 / Western).